The chain runs to 316 residues: Elongation factor Ts, mitochondrial (316 aa).

Residues 1–18 constitute a mitochondrion transit peptide; it reads MFARAPFVRLLSTTSRNL. The tract at residues 245 to 269 is disordered; it reads EAAESVKTQEGLRSQEGHDPNADPV.

It belongs to the EF-Ts family.

The protein localises to the mitochondrion. Its function is as follows. Associates with the EF-Tu.GDP complex and induces the exchange of GDP to GTP. It remains bound to the aminoacyl-tRNA.EF-Tu.GTP complex up to the GTP hydrolysis stage on the ribosome. This chain is Elongation factor Ts, mitochondrial, found in Caenorhabditis elegans.